The chain runs to 87 residues: Small ribosomal subunit protein uS15 (87 aa).

Over residues 1–19 (MDKAKKQELMAKHARHEGD) the composition is skewed to basic and acidic residues. Residues 1 to 23 (MDKAKKQELMAKHARHEGDTGSP) are disordered.

Belongs to the universal ribosomal protein uS15 family. In terms of assembly, part of the 30S ribosomal subunit. Forms a bridge to the 50S subunit in the 70S ribosome, contacting the 23S rRNA.

Functionally, one of the primary rRNA binding proteins, it binds directly to 16S rRNA where it helps nucleate assembly of the platform of the 30S subunit by binding and bridging several RNA helices of the 16S rRNA. Its function is as follows. Forms an intersubunit bridge (bridge B4) with the 23S rRNA of the 50S subunit in the ribosome. The chain is Small ribosomal subunit protein uS15 from Clostridium botulinum (strain Loch Maree / Type A3).